Reading from the N-terminus, the 951-residue chain is Multiple C2 and transmembrane domain-containing protein 1 (951 aa).

Disordered stretches follow at residues 29-79 (LGVG…RWSG), 92-117 (SSSQ…AEQG), 129-198 (LPVA…QKSS), and 210-231 (LEPA…ALQK). The segment covering 31-43 (VGKGKGGGGGRAG) has biased composition (gly residues). The segment covering 147–168 (PGGRSPDSAPSSSSASSSLSSS) has biased composition (low complexity). Residues 174 to 184 (RGDRVRDESTR) are compositionally biased toward basic and acidic residues. Residues 219-228 (PARGPAEPQA) show a composition bias toward low complexity. C2 domains lie at 240–358 (KIST…DVTL), 404–521 (QTQS…KLEL), and 555–676 (QKER…AYVL). The Ca(2+) site is built by Asp-275, Asp-281, Asp-328, Asp-330, Asp-336, Asp-438, Asp-444, Asp-491, Asp-493, Asp-499, Asp-594, Asp-600, Asp-646, Asp-648, and Asp-654. 2 helical membrane passes run 763–783 (FVLF…LLLL) and 866–886 (PFLS…LYFI).

It belongs to the MCTP family. It depends on Ca(2+) as a cofactor.

The protein localises to the cytoplasmic vesicle. It is found in the secretory vesicle. It localises to the synaptic vesicle membrane. The protein resides in the recycling endosome. Its subcellular location is the endoplasmic reticulum membrane. Calcium sensor which is essential for the stabilization of normal baseline neurotransmitter release and for the induction and long-term maintenance of presynaptic homeostatic plasticity. The protein is Multiple C2 and transmembrane domain-containing protein 1 of Mus musculus (Mouse).